The primary structure comprises 198 residues: Segregation and condensation protein B (198 aa).

Residues 167–198 are disordered; it reads PKLADPEADDPDQNEMDLFFDRFNQSKEQEEE. Positions 172 to 181 are enriched in acidic residues; it reads PEADDPDQNE.

It belongs to the ScpB family. Homodimer. Homodimerization may be required to stabilize the binding of ScpA to the Smc head domains. Component of a cohesin-like complex composed of ScpA, ScpB and the Smc homodimer, in which ScpA and ScpB bind to the head domain of Smc. The presence of the three proteins is required for the association of the complex with DNA.

Its subcellular location is the cytoplasm. Participates in chromosomal partition during cell division. May act via the formation of a condensin-like complex containing Smc and ScpA that pull DNA away from mid-cell into both cell halves. This chain is Segregation and condensation protein B, found in Listeria welshimeri serovar 6b (strain ATCC 35897 / DSM 20650 / CCUG 15529 / CIP 8149 / NCTC 11857 / SLCC 5334 / V8).